The sequence spans 354 residues: 5,10-methenyltetrahydromethanopterin hydrogenase (354 aa).

This sequence belongs to the HMD family.

It carries out the reaction 5,10-methenyl-5,6,7,8-tetrahydromethanopterin + H2 = 5,10-methylenetetrahydromethanopterin + H(+). The protein operates within one-carbon metabolism; methanogenesis from CO(2); 5,10-methylene-5,6,7,8-tetrahydromethanopterin from 5,10-methenyl-5,6,7,8-tetrahydromethanopterin (hydrogen route): step 1/1. Functionally, catalyzes the reversible reduction of methenyl-H(4)MPT(+) to methylene-H(4)MPT. This chain is 5,10-methenyltetrahydromethanopterin hydrogenase, found in Methanococcus maripaludis (strain C7 / ATCC BAA-1331).